The following is a 235-amino-acid chain: Glucosamine-6-phosphate deaminase (235 aa).

The Proton acceptor; for enolization step role is filled by Asp62. Asn128 serves as the catalytic For ring-opening step. His130 acts as the Proton acceptor; for ring-opening step in catalysis. Residue Glu135 is the For ring-opening step of the active site.

This sequence belongs to the glucosamine/galactosamine-6-phosphate isomerase family. NagB subfamily.

It catalyses the reaction alpha-D-glucosamine 6-phosphate + H2O = beta-D-fructose 6-phosphate + NH4(+). It functions in the pathway amino-sugar metabolism; N-acetylneuraminate degradation; D-fructose 6-phosphate from N-acetylneuraminate: step 5/5. Its function is as follows. Catalyzes the reversible isomerization-deamination of glucosamine 6-phosphate (GlcN6P) to form fructose 6-phosphate (Fru6P) and ammonium ion. The chain is Glucosamine-6-phosphate deaminase from Latilactobacillus sakei subsp. sakei (strain 23K) (Lactobacillus sakei subsp. sakei).